We begin with the raw amino-acid sequence, 94 residues long: Pyrimidine/purine nucleoside phosphorylase (94 aa).

The protein belongs to the nucleoside phosphorylase PpnP family.

It catalyses the reaction a purine D-ribonucleoside + phosphate = a purine nucleobase + alpha-D-ribose 1-phosphate. It carries out the reaction adenosine + phosphate = alpha-D-ribose 1-phosphate + adenine. The enzyme catalyses cytidine + phosphate = cytosine + alpha-D-ribose 1-phosphate. The catalysed reaction is guanosine + phosphate = alpha-D-ribose 1-phosphate + guanine. It catalyses the reaction inosine + phosphate = alpha-D-ribose 1-phosphate + hypoxanthine. It carries out the reaction thymidine + phosphate = 2-deoxy-alpha-D-ribose 1-phosphate + thymine. The enzyme catalyses uridine + phosphate = alpha-D-ribose 1-phosphate + uracil. The catalysed reaction is xanthosine + phosphate = alpha-D-ribose 1-phosphate + xanthine. Catalyzes the phosphorolysis of diverse nucleosides, yielding D-ribose 1-phosphate and the respective free bases. Can use uridine, adenosine, guanosine, cytidine, thymidine, inosine and xanthosine as substrates. Also catalyzes the reverse reactions. The protein is Pyrimidine/purine nucleoside phosphorylase of Salmonella arizonae (strain ATCC BAA-731 / CDC346-86 / RSK2980).